Here is a 128-residue protein sequence, read N- to C-terminus: Large ribosomal subunit protein bL12 (128 aa).

It belongs to the bacterial ribosomal protein bL12 family. In terms of assembly, homodimer. Part of the ribosomal stalk of the 50S ribosomal subunit. Forms a multimeric L10(L12)X complex, where L10 forms an elongated spine to which 2 to 4 L12 dimers bind in a sequential fashion. Binds GTP-bound translation factors.

Functionally, forms part of the ribosomal stalk which helps the ribosome interact with GTP-bound translation factors. Is thus essential for accurate translation. This chain is Large ribosomal subunit protein bL12, found in Synechococcus sp. (strain ATCC 27144 / PCC 6301 / SAUG 1402/1) (Anacystis nidulans).